The following is a 163-amino-acid chain: NADH-quinone oxidoreductase subunit I (163 aa).

4Fe-4S ferredoxin-type domains follow at residues 53–83 (LRRYPNGEERCIACKLCEAICPAQAITIEAG) and 94–123 (VRYDIDMVKCIYCGFCQEACPVDAIVEGPN). Positions 63, 66, 69, 73, 103, 106, 109, and 113 each coordinate [4Fe-4S] cluster.

The protein belongs to the complex I 23 kDa subunit family. NDH-1 is composed of 14 different subunits. Subunits NuoA, H, J, K, L, M, N constitute the membrane sector of the complex. [4Fe-4S] cluster is required as a cofactor.

Its subcellular location is the cell inner membrane. It catalyses the reaction a quinone + NADH + 5 H(+)(in) = a quinol + NAD(+) + 4 H(+)(out). NDH-1 shuttles electrons from NADH, via FMN and iron-sulfur (Fe-S) centers, to quinones in the respiratory chain. The immediate electron acceptor for the enzyme in this species is believed to be ubiquinone. Couples the redox reaction to proton translocation (for every two electrons transferred, four hydrogen ions are translocated across the cytoplasmic membrane), and thus conserves the redox energy in a proton gradient. The protein is NADH-quinone oxidoreductase subunit I of Brucella anthropi (strain ATCC 49188 / DSM 6882 / CCUG 24695 / JCM 21032 / LMG 3331 / NBRC 15819 / NCTC 12168 / Alc 37) (Ochrobactrum anthropi).